The sequence spans 426 residues: Serine--tRNA ligase (426 aa).

231–233 (TAE) contributes to the L-serine binding site. ATP-binding positions include 262-264 (RRE) and V278. E285 contributes to the L-serine binding site. Position 349–352 (349–352 (EVSS)) interacts with ATP. S384 lines the L-serine pocket.

This sequence belongs to the class-II aminoacyl-tRNA synthetase family. Type-1 seryl-tRNA synthetase subfamily. In terms of assembly, homodimer. The tRNA molecule binds across the dimer.

It localises to the cytoplasm. The catalysed reaction is tRNA(Ser) + L-serine + ATP = L-seryl-tRNA(Ser) + AMP + diphosphate + H(+). It carries out the reaction tRNA(Sec) + L-serine + ATP = L-seryl-tRNA(Sec) + AMP + diphosphate + H(+). Its pathway is aminoacyl-tRNA biosynthesis; selenocysteinyl-tRNA(Sec) biosynthesis; L-seryl-tRNA(Sec) from L-serine and tRNA(Sec): step 1/1. Functionally, catalyzes the attachment of serine to tRNA(Ser). Is also able to aminoacylate tRNA(Sec) with serine, to form the misacylated tRNA L-seryl-tRNA(Sec), which will be further converted into selenocysteinyl-tRNA(Sec). The sequence is that of Serine--tRNA ligase from Chlamydia caviae (strain ATCC VR-813 / DSM 19441 / 03DC25 / GPIC) (Chlamydophila caviae).